A 610-amino-acid chain; its full sequence is UvrABC system protein C (610 aa).

The GIY-YIG domain maps to 16–94; the sequence is SQPGVYRMYD…IKLYQPRYNV (79 aa). Positions 204–239 constitute a UVR domain; it reads QQVLTQLITRMEEASQQLHFEDAARIRDQIQAVRRV.

Belongs to the UvrC family. Interacts with UvrB in an incision complex.

It is found in the cytoplasm. In terms of biological role, the UvrABC repair system catalyzes the recognition and processing of DNA lesions. UvrC both incises the 5' and 3' sides of the lesion. The N-terminal half is responsible for the 3' incision and the C-terminal half is responsible for the 5' incision. This is UvrABC system protein C from Yersinia pseudotuberculosis serotype I (strain IP32953).